The chain runs to 458 residues: SLIT-ROBO Rho GTPase-activating protein 2B (458 aa).

The 303-residue stretch at 22–324 folds into the F-BAR domain; that stretch reads KEIRAQLTEQ…AVENLDATSD (303 aa). Basic and acidic residues predominate over residues 181 to 203; it reads LKEAEKQEEKQIGKSVKQEDRQT. The interval 181-214 is disordered; it reads LKEAEKQEEKQIGKSVKQEDRQTPRSPDSTANVR. The stretch at 362–400 forms a coiled coil; that stretch reads QSELLQRCQQLQSRLSTLKIENEEVKKTMEATLQTIQDI.

As to quaternary structure, may interact with SRGAP2; formation of the heterodimer alters SRGAP2 function.

May regulate cell migration and differentiation through interaction with and inhibition of SRGAP2. In contrast to SRGAP2C, it is not able to induce long-lasting changes in synaptic density throughout adulthood. The polypeptide is SLIT-ROBO Rho GTPase-activating protein 2B (SRGAP2B) (Homo sapiens (Human)).